Consider the following 811-residue polypeptide: Lon protease 1 (811 aa).

The 198-residue stretch at 15–212 (LPVLSLRDTV…SLALHLYRQI (198 aa)) folds into the Lon N-terminal domain. 376–383 (GPPGTGKT) contacts ATP. In terms of domain architecture, Lon proteolytic spans 613–794 (YDQPGVATGM…DEALARCLRL (182 aa)). Catalysis depends on residues S700 and K743.

This sequence belongs to the peptidase S16 family. In terms of assembly, homohexamer. Organized in a ring with a central cavity.

Its subcellular location is the cytoplasm. The enzyme catalyses Hydrolysis of proteins in presence of ATP.. Functionally, ATP-dependent serine protease that mediates the selective degradation of mutant and abnormal proteins as well as certain short-lived regulatory proteins. Required for cellular homeostasis and for survival from DNA damage and developmental changes induced by stress. Degrades polypeptides processively to yield small peptide fragments that are 5 to 10 amino acids long. Binds to DNA in a double-stranded, site-specific manner. The protein is Lon protease 1 of Sorangium cellulosum (strain So ce56) (Polyangium cellulosum (strain So ce56)).